Here is a 335-residue protein sequence, read N- to C-terminus: Tetraacyldisaccharide 4'-kinase (335 aa).

ATP is bound at residue 58–65 (TAGGSGKT).

The protein belongs to the LpxK family.

The catalysed reaction is a lipid A disaccharide + ATP = a lipid IVA + ADP + H(+). The protein operates within glycolipid biosynthesis; lipid IV(A) biosynthesis; lipid IV(A) from (3R)-3-hydroxytetradecanoyl-[acyl-carrier-protein] and UDP-N-acetyl-alpha-D-glucosamine: step 6/6. Functionally, transfers the gamma-phosphate of ATP to the 4'-position of a tetraacyldisaccharide 1-phosphate intermediate (termed DS-1-P) to form tetraacyldisaccharide 1,4'-bis-phosphate (lipid IVA). This Shewanella frigidimarina (strain NCIMB 400) protein is Tetraacyldisaccharide 4'-kinase.